The sequence spans 581 residues: Glutamyl-tRNA reductase (581 aa).

Substrate is bound by residues 49-52 (TCNR), Ser109, 114-116 (EGQ), and Gln120. The Nucleophile role is filled by Cys50. 192–197 (GAGSMS) serves as a coordination point for NADP(+). Positions 292–416 (PAVEDTAVQE…AEAPRPQPVL (125 aa)) are insert.

It belongs to the glutamyl-tRNA reductase family. Homodimer.

The enzyme catalyses (S)-4-amino-5-oxopentanoate + tRNA(Glu) + NADP(+) = L-glutamyl-tRNA(Glu) + NADPH + H(+). It functions in the pathway porphyrin-containing compound metabolism; protoporphyrin-IX biosynthesis; 5-aminolevulinate from L-glutamyl-tRNA(Glu): step 1/2. Its function is as follows. Catalyzes the NADPH-dependent reduction of glutamyl-tRNA(Glu) to glutamate 1-semialdehyde (GSA). This chain is Glutamyl-tRNA reductase, found in Streptomyces coelicolor (strain ATCC BAA-471 / A3(2) / M145).